The primary structure comprises 295 residues: NAD kinase (295 aa).

The Proton acceptor role is filled by aspartate 74. Residues 74-75 (DG), 148-149 (NE), arginine 176, aspartate 178, and 189-194 (TAYAMS) contribute to the NAD(+) site.

This sequence belongs to the NAD kinase family. A divalent metal cation is required as a cofactor.

It localises to the cytoplasm. The enzyme catalyses NAD(+) + ATP = ADP + NADP(+) + H(+). Involved in the regulation of the intracellular balance of NAD and NADP, and is a key enzyme in the biosynthesis of NADP. Catalyzes specifically the phosphorylation on 2'-hydroxyl of the adenosine moiety of NAD to yield NADP. The protein is NAD kinase of Acidithiobacillus ferrooxidans (strain ATCC 23270 / DSM 14882 / CIP 104768 / NCIMB 8455) (Ferrobacillus ferrooxidans (strain ATCC 23270)).